A 457-amino-acid polypeptide reads, in one-letter code: ERV-H1 provirus ancestral Env polyprotein (457 aa).

The first 35 residues, M1–P35, serve as a signal peptide directing secretion. N10 and N47 each carry an N-linked (GlcNAc...) asparagine glycan. The short motif at C64–C67 is the CXXC element. N-linked (GlcNAc...) asparagine glycans are attached at residues N197, N222, N265, N283, N352, and N370. A fusion peptide region spans residues V388 to S408.

It belongs to the gamma type-C retroviral envelope protein family. HERV class-I H env subfamily. As to quaternary structure, the surface (SU) and transmembrane (TM) proteins form a heterodimer. SU and TM are attached by noncovalent interactions or by a labile interchain disulfide bond. In terms of processing, specific enzymatic cleavages in vivo yield the mature SU and TM proteins. The CXXC motif is highly conserved across a broad range of retroviral envelope proteins. It is thought to participate in the formation of a labile disulfide bond possibly with the CX6CC motif present in the transmembrane protein.

It is found in the virion. Functionally, retroviral envelope proteins mediate receptor recognition and membrane fusion during early infection. Endogenous envelope proteins may have kept, lost or modified their original function during evolution. SU mediates receptor recognition. Its function is as follows. TM anchors the envelope heterodimer to the viral membrane through one transmembrane domain. The other hydrophobic domain, called fusion peptide, mediates fusion of the viral membrane with the target cell membrane. This Pan troglodytes (Chimpanzee) protein is ERV-H1 provirus ancestral Env polyprotein.